A 366-amino-acid polypeptide reads, in one-letter code: sn-glycerol-3-phosphate import ATP-binding protein UgpC (366 aa).

An ABC transporter domain is found at 4–235; the sequence is VTLRNVRKTY…PASTFVASFI (232 aa). 37 to 44 contacts ATP; that stretch reads GPSGCGKS.

The protein belongs to the ABC transporter superfamily. sn-glycerol-3-phosphate importer (TC 3.A.1.1.3) family. The complex is composed of two ATP-binding proteins (UgpC), two transmembrane proteins (UgpA and UgpE) and a solute-binding protein (UgpB).

Its subcellular location is the cell inner membrane. The catalysed reaction is sn-glycerol 3-phosphate(out) + ATP + H2O = sn-glycerol 3-phosphate(in) + ADP + phosphate + H(+). Its function is as follows. Part of the ABC transporter complex UgpBAEC involved in sn-glycerol-3-phosphate (G3P) import. Responsible for energy coupling to the transport system. The polypeptide is sn-glycerol-3-phosphate import ATP-binding protein UgpC (Rhodopseudomonas palustris (strain BisB18)).